Here is a 371-residue protein sequence, read N- to C-terminus: Cytochrome b (371 aa).

4 consecutive transmembrane segments (helical) span residues 25–45 (FGSM…FLAV), 69–90 (WMMQ…YIHI), 105–125 (WLSG…GYVL), and 170–190 (FFAL…LHIM). Heme b contacts are provided by His-75 and His-89. Positions 174 and 188 each coordinate heme b. A ubiquinone is bound at residue His-193. The next 4 membrane-spanning stretches (helical) occupy residues 218–238 (YKDL…VSFL), 280–300 (LWGA…PFTH), 312–332 (IMQL…WAAT), and 339–358 (FTMI…IMNP).

Belongs to the cytochrome b family. The cytochrome bc1 complex contains 3 respiratory subunits (MT-CYB, CYC1 and UQCRFS1), 2 core proteins (UQCRC1 and UQCRC2) and probably 6 low-molecular weight proteins. The cofactor is heme b.

It is found in the mitochondrion inner membrane. Functionally, component of the ubiquinol-cytochrome c reductase complex (complex III or cytochrome b-c1 complex) that is part of the mitochondrial respiratory chain. The b-c1 complex mediates electron transfer from ubiquinol to cytochrome c. Contributes to the generation of a proton gradient across the mitochondrial membrane that is then used for ATP synthesis. This Eryx miliaris nogaiorum (Black sand boa) protein is Cytochrome b (MT-CYB).